A 147-amino-acid chain; its full sequence is Putative pre-16S rRNA nuclease (147 aa).

The protein belongs to the YqgF nuclease family.

It localises to the cytoplasm. Could be a nuclease involved in processing of the 5'-end of pre-16S rRNA. The chain is Putative pre-16S rRNA nuclease from Limosilactobacillus reuteri (strain DSM 20016) (Lactobacillus reuteri).